The primary structure comprises 371 residues: Probable dual-specificity RNA methyltransferase RlmN (371 aa).

Glu-114 (proton acceptor) is an active-site residue. One can recognise a Radical SAM core domain in the interval 120 to 346 (DGPRRSICVS…ESAGVNVNFR (227 aa)). Residues Cys-127 and Cys-357 are joined by a disulfide bond. The [4Fe-4S] cluster site is built by Cys-134, Cys-138, and Cys-141. S-adenosyl-L-methionine contacts are provided by residues 183–184 (GE), Ser-215, 238–240 (SLH), and Asn-314. Catalysis depends on Cys-357, which acts as the S-methylcysteine intermediate.

Belongs to the radical SAM superfamily. RlmN family. The cofactor is [4Fe-4S] cluster.

The protein resides in the cytoplasm. The enzyme catalyses adenosine(2503) in 23S rRNA + 2 reduced [2Fe-2S]-[ferredoxin] + 2 S-adenosyl-L-methionine = 2-methyladenosine(2503) in 23S rRNA + 5'-deoxyadenosine + L-methionine + 2 oxidized [2Fe-2S]-[ferredoxin] + S-adenosyl-L-homocysteine. It carries out the reaction adenosine(37) in tRNA + 2 reduced [2Fe-2S]-[ferredoxin] + 2 S-adenosyl-L-methionine = 2-methyladenosine(37) in tRNA + 5'-deoxyadenosine + L-methionine + 2 oxidized [2Fe-2S]-[ferredoxin] + S-adenosyl-L-homocysteine. Its function is as follows. Specifically methylates position 2 of adenine 2503 in 23S rRNA and position 2 of adenine 37 in tRNAs. In Rhodopirellula baltica (strain DSM 10527 / NCIMB 13988 / SH1), this protein is Probable dual-specificity RNA methyltransferase RlmN.